The sequence spans 176 residues: NAD(P)H-quinone oxidoreductase subunit 6, chloroplastic (176 aa).

A run of 5 helical transmembrane segments spans residues 10–30 (FLLV…VLLT), 32–52 (PIYS…FYIP), 61–81 (AQLL…VMFM), 92–112 (LWTV…VSLI), and 152–172 (FFLP…GAIA).

This sequence belongs to the complex I subunit 6 family. NDH is composed of at least 16 different subunits, 5 of which are encoded in the nucleus.

It is found in the plastid. The protein resides in the chloroplast thylakoid membrane. It catalyses the reaction a plastoquinone + NADH + (n+1) H(+)(in) = a plastoquinol + NAD(+) + n H(+)(out). The catalysed reaction is a plastoquinone + NADPH + (n+1) H(+)(in) = a plastoquinol + NADP(+) + n H(+)(out). Its function is as follows. NDH shuttles electrons from NAD(P)H:plastoquinone, via FMN and iron-sulfur (Fe-S) centers, to quinones in the photosynthetic chain and possibly in a chloroplast respiratory chain. The immediate electron acceptor for the enzyme in this species is believed to be plastoquinone. Couples the redox reaction to proton translocation, and thus conserves the redox energy in a proton gradient. This chain is NAD(P)H-quinone oxidoreductase subunit 6, chloroplastic (ndhG), found in Platanus occidentalis (Sycamore).